Here is a 121-residue protein sequence, read N- to C-terminus: MARIAGVNIPNHKHTEIGLTAIYGVGRSRARKICEATGVPFDKKVKDLTDADLEKLRDEVGKVTVEGDLRRETTMNIKRLMDLGCYRGMRHRKGLPLRGQRTRTNARTRKGPRKAGVALKK.

The tract at residues 91-121 (HRKGLPLRGQRTRTNARTRKGPRKAGVALKK) is disordered.

The protein belongs to the universal ribosomal protein uS13 family. Part of the 30S ribosomal subunit. Forms a loose heterodimer with protein S19. Forms two bridges to the 50S subunit in the 70S ribosome.

Located at the top of the head of the 30S subunit, it contacts several helices of the 16S rRNA. In the 70S ribosome it contacts the 23S rRNA (bridge B1a) and protein L5 of the 50S subunit (bridge B1b), connecting the 2 subunits; these bridges are implicated in subunit movement. Contacts the tRNAs in the A and P-sites. In Cupriavidus pinatubonensis (strain JMP 134 / LMG 1197) (Cupriavidus necator (strain JMP 134)), this protein is Small ribosomal subunit protein uS13.